The primary structure comprises 144 residues: Large ribosomal subunit protein bL31c (144 aa).

Residues 1–48 constitute a chloroplast transit peptide; sequence MAVSLPNSFLQISPCVPSLQLRKPVMAAVKGGKQSVRRSSNTVVQITC.

The protein belongs to the bacterial ribosomal protein bL31 family. Type A subfamily. As to quaternary structure, part of the 50S ribosomal subunit.

The protein localises to the plastid. It is found in the chloroplast. Its function is as follows. Binds the 23S rRNA. In Arabidopsis thaliana (Mouse-ear cress), this protein is Large ribosomal subunit protein bL31c (RPL31).